A 512-amino-acid polypeptide reads, in one-letter code: Glutathione-binding protein GsiB (512 aa).

The N-terminal stretch at 1–26 (MTQFITHKWLAALGLASSIAAFPALA) is a signal peptide.

Belongs to the bacterial solute-binding protein 5 family. The complex is composed of two ATP-binding proteins (GsiA), two transmembrane proteins (GsiC and GsiD) and a solute-binding protein (GsiB).

Its subcellular location is the periplasm. Part of the ABC transporter complex GsiABCD involved in glutathione import. Binds glutathione. The polypeptide is Glutathione-binding protein GsiB (Salmonella choleraesuis (strain SC-B67)).